The primary structure comprises 158 residues: MTQEPGYTRLQITLHWAIAGLVLFNYIFGETMERAYDAVRQNVEPAGVGHYLHVVVGLAVLVLTLVRIGARFVLGVPEKGTTPGDKVAAGLQGLLYLLTLLVPALGMTAWGGGQAWAAGPHVLAANAIMLLALVHAVSALFHQYVLKDRLLLRMMRPR.

4 helical membrane passes run 12-32 (ITLH…GETM), 46-66 (AGVG…LTLV), 87-107 (VAAG…ALGM), and 121-141 (HVLA…SALF). Positions 15 and 53 each coordinate heme b. Heme b is bound by residues histidine 121 and histidine 135.

Belongs to the cytochrome b561 family. As to quaternary structure, homodimer. Requires heme b as cofactor.

It is found in the cell membrane. Functionally, cytochrome b562 is an integral component of the cytochrome b-c1 complex in the cyclic electron transfer system of photosynthetic bacteria. In Cereibacter sphaeroides (strain ATCC 17023 / DSM 158 / JCM 6121 / CCUG 31486 / LMG 2827 / NBRC 12203 / NCIMB 8253 / ATH 2.4.1.) (Rhodobacter sphaeroides), this protein is Cytochrome b562.